The chain runs to 446 residues: Tol-Pal system protein TolB (446 aa).

Positions 1–36 (MMDVQTVRRGNAVQSLMSKLILPLVMAVAFALPARA) are cleaved as a signal peptide. The interval 424-446 (GYNERPSPTPTFASDPAWSPRIQ) is disordered.

Belongs to the TolB family. As to quaternary structure, the Tol-Pal system is composed of five core proteins: the inner membrane proteins TolA, TolQ and TolR, the periplasmic protein TolB and the outer membrane protein Pal. They form a network linking the inner and outer membranes and the peptidoglycan layer.

The protein localises to the periplasm. Its function is as follows. Part of the Tol-Pal system, which plays a role in outer membrane invagination during cell division and is important for maintaining outer membrane integrity. In Parvibaculum lavamentivorans (strain DS-1 / DSM 13023 / NCIMB 13966), this protein is Tol-Pal system protein TolB.